The sequence spans 72 residues: Large ribosomal subunit protein uL29 (72 aa).

It belongs to the universal ribosomal protein uL29 family.

This chain is Large ribosomal subunit protein uL29, found in Microcystis aeruginosa (strain NIES-843 / IAM M-2473).